Consider the following 134-residue polypeptide: Putative STAG3-like protein 2 (134 aa).

The 86-residue stretch at 10–95 (PKVTCRDVLP…GRFKDWMVSM (86 aa)) folds into the SCD domain.

Belongs to the SCC3 family.

The protein resides in the nucleus. This Homo sapiens (Human) protein is Putative STAG3-like protein 2 (STAG3L2).